Consider the following 491-residue polypeptide: Delayed-rectifier potassium channel regulatory subunit KCNS3 (491 aa).

Over 1-182 the chain is Cytoplasmic; that stretch reads MVFGEFFHRP…IRMENPAYCL (182 aa). The helical transmembrane segment at 183-204 threads the bilayer; the sequence is SAKLIAISSLSVVLASIVAMCV. The Extracellular portion of the chain corresponds to 205-220; it reads HSMSEFQNEDGEVDDP. A helical transmembrane segment spans residues 221 to 243; sequence VLEGVEIACIAWFTGELAIRLVA. Over 244 to 254 the chain is Cytoplasmic; it reads APSQKKFWKNP. A helical membrane pass occupies residues 255-275; the sequence is LNIIDFVSIIPFYATLAVDTK. Topologically, residues 276-285 are extracellular; it reads EEESEDIENM. Residues 286-306 traverse the membrane as a helical; Voltage-sensor segment; that stretch reads GKVVQILRLMRIFRILKLARH. Over 307–321 the chain is Cytoplasmic; that stretch reads SVGLRSLGATLRHSY. A helical transmembrane segment spans residues 322–343; the sequence is HEVGLLLLFLSVGISIFSVLIY. The Extracellular portion of the chain corresponds to 344 to 357; that stretch reads SVEKDELASSLTSI. Positions 358 to 369 form an intramembrane region, helical; it reads PICWWWATISMT. Positions 370–375 match the Selectivity filter motif; sequence TVGYGD. An intramembrane segment occupies 370–377; it reads TVGYGDTH. At 378-384 the chain is on the extracellular side; the sequence is PVTLAGK. The helical transmembrane segment at 385-413 threads the bilayer; that stretch reads IIASTCIICGILVVALPITIIFNKFSKYY. The Cytoplasmic portion of the chain corresponds to 414–491; that stretch reads QKQKDMDVDQ…TASLENCTAK (78 aa).

Belongs to the potassium channel family. S (TC 1.A.1.2) subfamily. Kv9.3/KCNS3 sub-subfamily. In terms of assembly, heterotetramer with KCNB1. Does not form homomultimers. As to expression, expressed in myocytes. Detected in lung, spleen, brain and heart.

It localises to the cell membrane. Potassium channel regulatory subunit that modulates the delayed rectifier potassium channel activity of KCNB1 by namely slowing down the deactivation and inactivation time constants. While it does not form functional channel on its own, it can form functional heterotetrameric channels with KCNB1. This Rattus norvegicus (Rat) protein is Delayed-rectifier potassium channel regulatory subunit KCNS3.